The chain runs to 255 residues: Thiazole synthase (255 aa).

Lysine 97 functions as the Schiff-base intermediate with DXP in the catalytic mechanism. 1-deoxy-D-xylulose 5-phosphate-binding positions include glycine 158, 184–185 (AG), and 206–207 (NT).

This sequence belongs to the ThiG family. As to quaternary structure, homotetramer. Forms heterodimers with either ThiH or ThiS.

It is found in the cytoplasm. The enzyme catalyses [ThiS sulfur-carrier protein]-C-terminal-Gly-aminoethanethioate + 2-iminoacetate + 1-deoxy-D-xylulose 5-phosphate = [ThiS sulfur-carrier protein]-C-terminal Gly-Gly + 2-[(2R,5Z)-2-carboxy-4-methylthiazol-5(2H)-ylidene]ethyl phosphate + 2 H2O + H(+). It participates in cofactor biosynthesis; thiamine diphosphate biosynthesis. Catalyzes the rearrangement of 1-deoxy-D-xylulose 5-phosphate (DXP) to produce the thiazole phosphate moiety of thiamine. Sulfur is provided by the thiocarboxylate moiety of the carrier protein ThiS. In vitro, sulfur can be provided by H(2)S. The polypeptide is Thiazole synthase (Moorella thermoacetica (strain ATCC 39073 / JCM 9320)).